A 296-amino-acid polypeptide reads, in one-letter code: MHDEDQYLHLIRRVLDTGDLRPDRTGTGTISLFAPPNLRFSLRESTVPLLTTKRTFLRGIVEELLWFTNGLTDSKILSDKGVKIWDGNGSKAFLESRGLGHRREGDLGPVYGFQWRHFGAEYEDCDADYAGKGVDQLRECIRKIKENPTDRRIILSAWNPKDIPSMALPPCHMLCQFYVHLPADTAKPELSCLMFQRSADLGLGIPFNIASYALLTHMIAHVTGTTARELIIQLGDAHVYRDHVEALEVQLQREPRPFPKLRWARDGITDIEDFEYSDFVIEGYNPHPSIAMKMSV.

Residues Arg24 and 151-152 (RR) contribute to the dUMP site. Cys171 acts as the Nucleophile in catalysis. DUMP is bound by residues 197-200 (RSAD), Asn208, and 238-240 (HVY). Asp200 contributes to the (6R)-5,10-methylene-5,6,7,8-tetrahydrofolate binding site.

Belongs to the thymidylate synthase family. As to quaternary structure, homodimer.

The catalysed reaction is dUMP + (6R)-5,10-methylene-5,6,7,8-tetrahydrofolate = 7,8-dihydrofolate + dTMP. The protein operates within pyrimidine metabolism; dTTP biosynthesis. In Agaricus bisporus (White button mushroom), this protein is Thymidylate synthase (tms1).